The chain runs to 179 residues: Inosine/xanthosine triphosphatase (179 aa).

E71 contacts Mg(2+). 71-72 (EA) is a substrate binding site.

Belongs to the YjjX NTPase family. In terms of assembly, homodimer. Mg(2+) is required as a cofactor. Requires Mn(2+) as cofactor.

It catalyses the reaction XTP + H2O = XDP + phosphate + H(+). The enzyme catalyses ITP + H2O = IDP + phosphate + H(+). Phosphatase that hydrolyzes non-canonical purine nucleotides such as XTP and ITP to their respective diphosphate derivatives. Probably excludes non-canonical purines from DNA/RNA precursor pool, thus preventing their incorporation into DNA/RNA and avoiding chromosomal lesions. In Shewanella sp. (strain MR-7), this protein is Inosine/xanthosine triphosphatase.